Consider the following 335-residue polypeptide: Syntaxin-18 (335 aa).

The Cytoplasmic segment spans residues Met-1–Asn-309. Basic and acidic residues-rich tracts occupy residues Lys-168 to Ser-182 and Lys-192 to Leu-208. The disordered stretch occupies residues Lys-168–Glu-226. A t-SNARE coiled-coil homology domain is found at Ile-243–Ala-305. The helical; Anchor for type IV membrane protein transmembrane segment at Ala-310 to Leu-330 threads the bilayer. Topologically, residues Asp-331 to Ser-335 are vesicular.

This sequence belongs to the syntaxin family. As to quaternary structure, component of a SNARE complex consisting of STX18, USE1L, BNIP1/SEC20L, and SEC22B. RINT1/TIP20L and ZW10 are associated with the complex through interaction with BNIP1/SEC20L. Interacts directly with USE1L and BNIP1/SEC20L. In terms of tissue distribution, ubiquitous.

The protein resides in the endoplasmic reticulum membrane. Its subcellular location is the golgi apparatus membrane. Functionally, syntaxin that may be involved in targeting and fusion of Golgi-derived retrograde transport vesicles with the ER. In Homo sapiens (Human), this protein is Syntaxin-18 (STX18).